Reading from the N-terminus, the 479-residue chain is MTVILPDFLKSNVLVVGDIMLDRYWYGSTNKISFESPVPVVEINNVIDIPGGAANVAMNIASLGGRVRLIGLVGVDDAAQRLKKRLTECKIKWNFISVDTHPTIMKLRVMSRNQQMIRLDFEKKFNNVNTDQLMNVIKVYLPQYKVLALSDYAKGTLDCVEEIIKIARFFKIPIIIDPKGVQFSKYKGATILTPNMSEFEAIVGFCSNEEIIIKRAKELMNEYDLLALLITRSDQGMTLLQRSLDPLYFSAQSKEVYDVTGAGDTVVGVLSAALSLGENLEKSCFLANAAAGSVVEKSGTSTVNVAEINNVVQKYEYTKIPTGIVDRGLLKYVVSVVRGRGEKIVMTNGVFDILHYGHISYLMDAKKLGHRLIVAVNSDKSTRRLKGKHRPINVLERRMFVLSALSMVDWVVSFDEDNPIQLILEISPDFLVKGGDYNVNNIVGGKEVLRQGGQVCVLKFQEDCSSSSIIDTMEINEIN.

The ribokinase stretch occupies residues 1 to 319 (MTVILPDFLK…NVVQKYEYTK (319 aa)). 195 to 198 (NMSE) provides a ligand contact to ATP. Asp-264 is an active-site residue. A cytidylyltransferase region spans residues 346–479 (MTNGVFDILH…IDTMEINEIN (134 aa)).

In the N-terminal section; belongs to the carbohydrate kinase PfkB family. This sequence in the C-terminal section; belongs to the cytidylyltransferase family. As to quaternary structure, homodimer.

The enzyme catalyses D-glycero-beta-D-manno-heptose 7-phosphate + ATP = D-glycero-beta-D-manno-heptose 1,7-bisphosphate + ADP + H(+). It carries out the reaction D-glycero-beta-D-manno-heptose 1-phosphate + ATP + H(+) = ADP-D-glycero-beta-D-manno-heptose + diphosphate. The protein operates within nucleotide-sugar biosynthesis; ADP-L-glycero-beta-D-manno-heptose biosynthesis; ADP-L-glycero-beta-D-manno-heptose from D-glycero-beta-D-manno-heptose 7-phosphate: step 1/4. It participates in nucleotide-sugar biosynthesis; ADP-L-glycero-beta-D-manno-heptose biosynthesis; ADP-L-glycero-beta-D-manno-heptose from D-glycero-beta-D-manno-heptose 7-phosphate: step 3/4. Functionally, catalyzes the phosphorylation of D-glycero-D-manno-heptose 7-phosphate at the C-1 position to selectively form D-glycero-beta-D-manno-heptose-1,7-bisphosphate. Catalyzes the ADP transfer from ATP to D-glycero-beta-D-manno-heptose 1-phosphate, yielding ADP-D-glycero-beta-D-manno-heptose. In Blochmanniella floridana, this protein is Bifunctional protein HldE.